Here is a 111-residue protein sequence, read N- to C-terminus: Disintegrin acostatin-alpha (111 aa).

An N-terminal signal peptide occupies residues 1 to 20 (MIQVLLVTLCLAVFPYQGSS). Positions 21–46 (IILESGNVNDYEVVYPRKVTALPKGA) are excised as a propeptide. The Disintegrin domain maps to 47–111 (IQPKNPCCDA…GDCPRKHFYA (65 aa)). Glutamine 48 is modified (pyrrolidone carboxylic acid; in Disintegrin acostatin-alpha, processed form). 4 disulfide bridges follow: cysteine 53–cysteine 76, cysteine 67–cysteine 73, cysteine 72–cysteine 97, and cysteine 85–cysteine 104. A Cell attachment site motif is present at residues 89-91 (RGD). The propeptide occupies 110–111 (YA).

This sequence belongs to the disintegrin family. Dimeric disintegrin subfamily. Heterodimer with subunit beta; disulfide-linked. In terms of tissue distribution, expressed by the venom gland.

Its subcellular location is the secreted. Functionally, inhibits fibrinogen interaction with platelets. Acts by binding to alpha-IIb/beta-3 (ITGA2B/ITGB3) on the platelet surface and inhibits ADP-induced platelet aggregation in human platelet-rich plasma. In Agkistrodon contortrix contortrix (Southern copperhead), this protein is Disintegrin acostatin-alpha.